The following is a 325-amino-acid chain: Palmitoyltransferase PFA3 (325 aa).

At 1–8 the chain is on the cytoplasmic side; the sequence is MHICSLIP. The helical transmembrane segment at 9–29 threads the bilayer; the sequence is ILFPKLLTCGLALYSAVVLWL. A topological domain (lumenal) is located at residue Lys-30. The helical transmembrane segment at 31-51 threads the bilayer; it reads VSVIGSFIQGTVLLTLVPLIL. The Cytoplasmic portion of the chain corresponds to 52–147; sequence YAYFSTIAVG…PGCIGYNNHK (96 aa). The region spanning 104 to 154 is the DHHC domain; that stretch reads RYCVKCKVWKPDRCHHCSACDKCYLRRDHHCVWFPGCIGYNNHKFFLHFLL. The chain crosses the membrane as a helical span at residues 148–168; it reads FFLHFLLYASVYAFWICIITT. Topologically, residues 169–188 are lumenal; sequence WDLVVWFRAHSYERELLNVH. The helical transmembrane segment at 189–209 threads the bilayer; the sequence is LVCLWALSAAATVALTAFCAF. Over 210-325 the chain is Cytoplasmic; the sequence is NIYLVCKNET…TRFNSKRAVQ (116 aa).

This sequence belongs to the DHHC palmitoyltransferase family. PFA3 subfamily. Post-translationally, autopalmitoylated.

The protein resides in the vacuole membrane. The enzyme catalyses L-cysteinyl-[protein] + hexadecanoyl-CoA = S-hexadecanoyl-L-cysteinyl-[protein] + CoA. In terms of biological role, palmitoyltransferase specific for VAC8. Palmitoylates VAC8 at one or more of its N-terminal cysteine residues, which is required for its proper membrane localization. This chain is Palmitoyltransferase PFA3 (PFA3), found in Eremothecium gossypii (strain ATCC 10895 / CBS 109.51 / FGSC 9923 / NRRL Y-1056) (Yeast).